We begin with the raw amino-acid sequence, 644 residues long: Heat shock protein SSC3, mitochondrial (644 aa).

This sequence belongs to the heat shock protein 70 family.

The protein resides in the mitochondrion matrix. Its subcellular location is the mitochondrion nucleoid. In terms of biological role, plays a role in facilitating the assembly of some protein complexes inside the mitochondria. It may initiate the events that lead to refolding of imported precursors in the matrix space. The chain is Heat shock protein SSC3, mitochondrial (ECM10) from Saccharomyces cerevisiae (strain ATCC 204508 / S288c) (Baker's yeast).